The primary structure comprises 850 residues: MDTTLPPPQHMEREPLKSKSSLLPMTRRGNGSKGQKILLLTNHFRVNFRKPNSHNFFHYSVTITYEDGSPLLAKGFGRKILEKVQQTCQADLGCKHFAYDGDKNLYTVGPLPRSSLDFSVVLETAPSRRNADKRLKLPHQSKKFNVAILFAPPEIPMEAIANALQGKKTKHLLDAIRVMDCILSQNAARQGCLLVRQSFFHNDAKYFANIGEGVDCCKGFHSSFRTTQGGLSLNIDVSTAMIVKPGPVVDFLIANQGVNDPFSINWKKAKNTLKNLRVKVLPSNQEYKITGLSGLHCKDQTFTWKKRNQNREFEEVEITVSDYFTRIREIELRYSGGLPCINVGKPNRPTYFPIELCELVSLQRYTKALTKFQRSNLIKESRQNPQQRIGVLTRALKTSNYNDDPMLQECGVRIGSDFTQVEGRVLPTPKLKAGKEQDIYPINGSWNFKNKPATVTRWAVVNFSARCDPQKIIDDLTRCGKMKGINVDSPYHVVFEENPQFKDATGSVRVDKMFQHLQSILGEVPPKFLLCILEKKNSDVYEKSCSMWNCECIVPPQNLNDQYLTNLLLKINAKLGGLNSVLDMELSGTMPLVMRVPTIIIGMDVSHGSPGQSDHIPSIAAVVSSREWPLISKYRACVRTQSPKVEMIDSLFKPVSDKDDQGIMRELLLDFHSSSGKKPNHIIIFRDGVSESQFNQVLNIELDQMMQINHHTKFFQTESPNNVLPGTIIDSNICHQHNNDFYLCAHAGKIGTTRPTHYHVLYDEIGFDTDQLQELVHSLSYVYQRSTTAISLVAPICYAHLAAAQMATAMKFEDMSETSSSHGGITTAGAVPVPPMPKLNTNVASSMFFC.

Residues Met-1 to Asn-30 form a disordered region. In terms of domain architecture, PAZ spans Pro-247 to Ser-361. Residues Gln-518–Lys-811 form the Piwi domain.

This sequence belongs to the argonaute family. Ago subfamily.

Involved in RNA-mediated post-transcriptional gene silencing (PTGS). Main component of the RNA-induced silencing complex (RISC) that binds to a short guide RNA such as a microRNA (miRNA) or small interfering RNA (siRNA). RISC uses the mature miRNA or siRNA as a guide for slicer-directed cleavage of homologous mRNAs to repress gene expression. This chain is Protein argonaute 8 (AGO8), found in Arabidopsis thaliana (Mouse-ear cress).